The sequence spans 389 residues: Mesotocin receptor (389 aa).

Residues 1-50 (MEGLCLNLDCSELPNSSWVNSSMENQNHSSNSTRDPLKRNEEVAKVEVTV) are Extracellular-facing. N-linked (GlcNAc...) asparagine glycosylation is found at Asn-15, Asn-20, Asn-27, and Asn-31. Residues 51–71 (LALILFLALAGNICVLLGIYI) traverse the membrane as a helical segment. The Cytoplasmic segment spans residues 72-87 (NRHKHSRMYFFMKHLS). A helical transmembrane segment spans residues 88 to 108 (IADLVVAIFQVLPQLIWDITF). The Extracellular segment spans residues 109–119 (RFYAPDLVCRL). Cysteines 117 and 192 form a disulfide. Residues 120 to 140 (VTYLQVVGMFASTYMLLLMSL) form a helical membrane-spanning segment. Residues 141–159 (DRCLAICQPLRSLHRRSDC) lie on the Cytoplasmic side of the membrane. The chain crosses the membrane as a helical span at residues 160-180 (VYVLFTWILSFLLSTPQTVIF). Residues 181–207 (SLTEVGNGVYDCRADFIQPWGPKAYIT) lie on the Extracellular side of the membrane. Residues 208-228 (WITLAVYIIPVMILSVCYGLI) traverse the membrane as a helical segment. At 229-275 (SYKIWQNIRLKTVCESNLRLSTSRRATLSRVSSVRLISKAKIRTVKM) the chain is on the cytoplasmic side. Residues 276–296 (TFIIVLAYIVCWTPFFFVQMW) form a helical membrane-spanning segment. The Extracellular portion of the chain corresponds to 297-308 (SVWDPNPPKEAS). Residues 309-329 (LFIIAMLLGSLNSCCNPWIYM) traverse the membrane as a helical segment. Residues 330-389 (LFTGHLFHDLLQSFLCCSARYLKTQQQGSDLSASRKSNSSTFVLSRKSSSQKSITQPSTA) are Cytoplasmic-facing. The tract at residues 360–389 (LSASRKSNSSTFVLSRKSSSQKSITQPSTA) is disordered.

The protein belongs to the G-protein coupled receptor 1 family. Vasopressin/oxytocin receptor subfamily. As to expression, highly expressed in the bladder. Also expressed in kidney, brain and skeletal muscle.

It localises to the cell membrane. Its function is as follows. Binds to mesotocin and may play a role in the regulation of water and salt transport. This Rhinella marina (Cane toad) protein is Mesotocin receptor.